We begin with the raw amino-acid sequence, 415 residues long: Histidine--tRNA ligase (415 aa).

It belongs to the class-II aminoacyl-tRNA synthetase family. Homodimer.

The protein resides in the cytoplasm. The catalysed reaction is tRNA(His) + L-histidine + ATP = L-histidyl-tRNA(His) + AMP + diphosphate + H(+). The protein is Histidine--tRNA ligase of Idiomarina loihiensis (strain ATCC BAA-735 / DSM 15497 / L2-TR).